A 177-amino-acid polypeptide reads, in one-letter code: Putative thioredoxin peroxidase (177 aa).

A Thioredoxin domain is found at 1–158; that stretch reads MFPKTLTDSK…IIRLIDAITF (158 aa). Cysteine 45 (cysteine sulfenic acid (-SOH) intermediate) is an active-site residue.

This sequence belongs to the peroxiredoxin family. AhpC/Prx1 subfamily. Homodimer; disulfide-linked, upon oxidation.

The enzyme catalyses a hydroperoxide + [thioredoxin]-dithiol = an alcohol + [thioredoxin]-disulfide + H2O. Its function is as follows. Thiol-specific peroxidase that catalyzes the reduction of hydrogen peroxide and organic hydroperoxides to water and alcohols, respectively. Plays a role in cell protection against oxidative stress by detoxifying peroxides and as sensor of hydrogen peroxide-mediated signaling events. The chain is Putative thioredoxin peroxidase from Encephalitozoon cuniculi (strain GB-M1) (Microsporidian parasite).